A 419-amino-acid chain; its full sequence is Innexin inx5 (419 aa).

The Cytoplasmic portion of the chain corresponds to 1–21; the sequence is MFSAVKPLSKYLQFKSIRIYD. Residues 22–42 traverse the membrane as a helical segment; sequence SVFTIHSRCTVVILLTCSLLL. Over 43–162 the chain is Extracellular; sequence SARQYFGDPI…QTERQYLRYY (120 aa). The helical transmembrane segment at 163 to 183 threads the bilayer; sequence QWVIILLLFQSFVFYFPSCLW. Over 184 to 238 the chain is Cytoplasmic; the sequence is KVWEGRRLKQLCSEVGDALLSEETYNTRLRMLVKYFTTDYEDMHFCYMAKYVFCE. Residues 239 to 259 traverse the membrane as a helical segment; it reads VLNFLISVVNIIVLEVFLNGF. Residues 260–320 lie on the Extracellular side of the membrane; it reads WSKYLRALAT…ILPLNILNEK (61 aa). Residues 321–341 traverse the membrane as a helical segment; the sequence is IFVFLWAWFLLMALMSGLNLL. At 342 to 419 the chain is on the cytoplasmic side; it reads CRLAMICSRY…ASGSTLESPV (78 aa).

It belongs to the pannexin family. As to expression, expressed in the cortex of the pupal CNS and at low levels in the wing imaginal disk.

The protein resides in the cell membrane. It is found in the cell junction. Its subcellular location is the gap junction. Structural component of the gap junctions. The chain is Innexin inx5 (Inx5) from Drosophila melanogaster (Fruit fly).